The primary structure comprises 1505 residues: Probable serine/threonine-protein kinase irlD (1505 aa).

Over residues 1–18 (MGPKKGKRSHSKNHHHHN) the composition is skewed to basic residues. 4 disordered regions span residues 1 to 30 (MGPK…NSGG), 121 to 211 (IPQP…NNIL), 548 to 571 (TTTT…DKEN), and 862 to 1013 (EENE…TIAT). Over residues 139-158 (SISTTTTTTTATAIEIESSS) the composition is skewed to low complexity. Positions 159–172 (GLTSNITDSTEIQL) are enriched in polar residues. Composition is skewed to low complexity over residues 173 to 209 (DSTT…NSNN) and 548 to 561 (TTTT…TTTT). 2 stretches are compositionally biased toward basic and acidic residues: residues 562 to 571 (IDKDEKDKEN) and 862 to 882 (EENE…EKKK). A coiled-coil region spans residues 846–892 (IRTEESLKAEKDLLEQEENEKKRLKEKRKKEEKEKKKQQNLKQKSLI). Low complexity predominate over residues 896–924 (TTTTTTTTPIPITVPIPTQTQTPTQTPTQ). Positions 925–943 (TPIPTPIPTTPIPTTPIPI) are enriched in pro residues. Composition is skewed to low complexity over residues 944–954 (PIQLTPTTPKT) and 960–977 (TPKT…KTPK). Over residues 978 to 989 (NSTLDKQTISTP) the composition is skewed to polar residues. Residues 1054-1324 (RKDEFIIGRG…TENILLHPFF (271 aa)) enclose the Protein kinase domain. Residues 1060–1068 (IGRGSNGTL) and lysine 1083 each bind ATP. Aspartate 1194 functions as the Proton acceptor in the catalytic mechanism. Residues 1327-1505 (HEKKVKFIDA…LIYFNDLIIK (179 aa)) form the KEN domain.

This sequence belongs to the protein kinase superfamily. Ser/Thr protein kinase family.

It catalyses the reaction L-seryl-[protein] + ATP = O-phospho-L-seryl-[protein] + ADP + H(+). The enzyme catalyses L-threonyl-[protein] + ATP = O-phospho-L-threonyl-[protein] + ADP + H(+). In Dictyostelium discoideum (Social amoeba), this protein is Probable serine/threonine-protein kinase irlD (irlD).